We begin with the raw amino-acid sequence, 900 residues long: Zinc finger protein 62 homolog (900 aa).

Residues 1 to 97 (MSHLKTSTED…EASEKSLHLS (97 aa)) form a disordered region. Residue Lys-5 forms a Glycyl lysine isopeptide (Lys-Gly) (interchain with G-Cter in SUMO2) linkage. Residues 9-18 (EDEEPTEEYE) show a composition bias toward acidic residues. The span at 47 to 73 (SKVENQQKKPVENRMKEDKSSIREAIS) shows a compositional bias: basic and acidic residues. Residues Lys-48, Lys-62, Lys-65, Lys-82, and Lys-92 each participate in a glycyl lysine isopeptide (Lys-Gly) (interchain with G-Cter in SUMO2) cross-link. The segment covering 83–94 (TEQEGEASEKSL) has biased composition (basic and acidic residues). 13 consecutive C2H2-type zinc fingers follow at residues 225–247 (CKCDECGKSFNYSSVLDQHKRIH), 253–275 (YECGECGKAFRNSSGLRVHKRIH), 281–303 (YECDICGKTFSNSSGLRVHKRIH), 309–331 (YECDECGKAFITCRTLLNHKSIH), 337–359 (YKCDECEKSFNYSSLLIQHKVIH), 365–387 (YECDECGKAFRNSSGLIVHKRIH), 393–415 (YKCDVCGKAFSYSSGLAVHKSIH), 421–443 (HECKECGKSFSYNSLLLQHRTIH), 449–471 (YVCDVCGKTFRNNAGLKVHRRLH), 477–499 (YKCDVCGKAYISRSSLKNHKGIH), 505–527 (YKCSYCEKSFNYSSALEQHKRIH), 533–555 (FGCDECGKAFRNNSGLKVHKRIH), and 561–583 (YKCEECGKAYISLSSLINHKSVH). Residue Lys-587 forms a Glycyl lysine isopeptide (Lys-Gly) (interchain with G-Cter in SUMO2) linkage. 10 consecutive C2H2-type zinc fingers follow at residues 589-611 (FKCDECEKAFITYRTLTNHKKVH), 617-639 (YKCDVCEKSFNYTSLLSQHRRVH), 645-667 (YECDRCEKVFRNNSSLKVHKRIH), 673-695 (YECDVCGKAYISHSSLINHKSTH), 701-723 (HTCDECGKAFFSSRTLISHKRVH), 729-751 (FKCVECGKSFSYSSLLSQHKRIH), 757-779 (YVCDRCGKAFRNSSGLTVHKRIH), 785-807 (YECDECGKAYISHSSLINHKSVH), 813-834 (YNCECGKSFNYRSVLDQHKRIH), and 840-862 (YRCNECGKAFNIRSNLTKHKRTH). Lys-748 participates in a covalent cross-link: Glycyl lysine isopeptide (Lys-Gly) (interchain with G-Cter in SUMO2). Residue Lys-882 forms a Glycyl lysine isopeptide (Lys-Gly) (interchain with G-Cter in SUMO2) linkage.

Belongs to the krueppel C2H2-type zinc-finger protein family.

Its subcellular location is the nucleus. May play a role in differentiating skeletal muscle. This chain is Zinc finger protein 62 homolog (ZFP62), found in Homo sapiens (Human).